A 173-amino-acid chain; its full sequence is Large ribosomal subunit protein uL10 (173 aa).

This sequence belongs to the universal ribosomal protein uL10 family. Part of the ribosomal stalk of the 50S ribosomal subunit. The N-terminus interacts with L11 and the large rRNA to form the base of the stalk. The C-terminus forms an elongated spine to which L12 dimers bind in a sequential fashion forming a multimeric L10(L12)X complex.

Forms part of the ribosomal stalk, playing a central role in the interaction of the ribosome with GTP-bound translation factors. The protein is Large ribosomal subunit protein uL10 of Christiangramia forsetii (strain DSM 17595 / CGMCC 1.15422 / KT0803) (Gramella forsetii).